The sequence spans 231 residues: MKRGKRYLENLKLYDKTQQYSSDEAMDIVLKTANAKFDETIDLAVRLGVDPRHADQQVRGTVILPHGTGKTVKVLVFAKGEKAKEAEAAGADYVGAEELVEKIQKENWFDYDVVIATPDMMGVVGRLGKLLGPKGLMPNPKSGTVTFEVEKAVKEAKAGKIEYRIDKAGIIHVPIGKKSFGKEKLLENFRTVMDAIIKSKPAAAKGQYIKSVVLSSTMGPGVKVNPARIFE.

The protein belongs to the universal ribosomal protein uL1 family. Part of the 50S ribosomal subunit.

In terms of biological role, binds directly to 23S rRNA. The L1 stalk is quite mobile in the ribosome, and is involved in E site tRNA release. Its function is as follows. Protein L1 is also a translational repressor protein, it controls the translation of the L11 operon by binding to its mRNA. The chain is Large ribosomal subunit protein uL1 from Caldanaerobacter subterraneus subsp. tengcongensis (strain DSM 15242 / JCM 11007 / NBRC 100824 / MB4) (Thermoanaerobacter tengcongensis).